The sequence spans 492 residues: Ferruginol synthase (492 aa).

Residues 1–21 traverse the membrane as a helical segment; the sequence is METIALLAALFFIALTCFLTS. The Cytoplasmic portion of the chain corresponds to 22 to 492; it reads GRRRNLPPGP…VPLKIIPLRP (471 aa). C436 contacts heme.

Belongs to the cytochrome P450 family. It depends on heme as a cofactor.

The protein localises to the endoplasmic reticulum membrane. The enzyme catalyses abieta-8,11,13-triene + reduced [NADPH--hemoprotein reductase] + O2 = ferruginol + oxidized [NADPH--hemoprotein reductase] + H2O + H(+). Its pathway is secondary metabolite biosynthesis; terpenoid biosynthesis. Its function is as follows. Cytochrome P450 enzyme (CYP) which catalyzes a unique two-electron oxidation cascade on abieta-8,11,13-triene to produce ferruginol, an intermediate in tanshinone biosynthesis. This Isodon rubescens (Rabdosia rubescens) protein is Ferruginol synthase.